The following is a 142-amino-acid chain: Hemoglobin subunit alpha-2 (142 aa).

Residues 2–142 form the Globin domain; the sequence is LLTADDKKHI…VSSVLTSKYR (141 aa). His-59 contributes to the O2 binding site. Position 88 (His-88) interacts with heme b.

It belongs to the globin family. As to quaternary structure, heterotetramer of two alpha chains and two beta chains. As to expression, red blood cells.

Involved in oxygen transport from the lung to the various peripheral tissues. In Xenopus borealis (Kenyan clawed frog), this protein is Hemoglobin subunit alpha-2 (hba2).